We begin with the raw amino-acid sequence, 497 residues long: Long chain base biosynthesis protein 2c (497 aa).

Residues 4 to 24 (VPFVTAVTTVFSYGVIFGFGH) form a helical membrane-spanning segment. Lys319 is modified (N6-(pyridoxal phosphate)lysine).

The protein belongs to the class-II pyridoxal-phosphate-dependent aminotransferase family. In terms of assembly, heterodimer with LCB1. Component of the serine palmitoyltransferase (SPT) complex, composed of LCB1 and LCB2. The cofactor is pyridoxal 5'-phosphate.

Its subcellular location is the endoplasmic reticulum membrane. The enzyme catalyses L-serine + hexadecanoyl-CoA + H(+) = 3-oxosphinganine + CO2 + CoA. It participates in lipid metabolism; sphingolipid metabolism. In terms of biological role, serine palmitoyltransferase (SPT). The heterodimer formed with LCB1 constitutes the catalytic core. In Oryza sativa subsp. japonica (Rice), this protein is Long chain base biosynthesis protein 2c.